We begin with the raw amino-acid sequence, 102 residues long: Small ribosomal subunit protein uS10 (102 aa).

It belongs to the universal ribosomal protein uS10 family. As to quaternary structure, part of the 30S ribosomal subunit.

Its function is as follows. Involved in the binding of tRNA to the ribosomes. This Staphylococcus saprophyticus subsp. saprophyticus (strain ATCC 15305 / DSM 20229 / NCIMB 8711 / NCTC 7292 / S-41) protein is Small ribosomal subunit protein uS10.